Here is a 335-residue protein sequence, read N- to C-terminus: NADH-quinone oxidoreductase subunit H (335 aa).

8 helical membrane passes run 12–32, 81–101, 114–134, 154–174, 187–207, 238–258, 270–290, and 307–327; these read IIAVVKAIVVLLAVVVCGALL, VIFTLAPVVAMSALLIAFAVI, IGLLFFFAMAGLSVYAVLFAG, VSYEVFMGLALMGIVVQVGSF, LWFIIPQFFGFCTFFIAGVAV, FFVGEYIGIILISALLVTLFF, SLAFFWFALKTAFFIMLFILL, and WKFCLPLTLINLLVTAAIVLL.

The protein belongs to the complex I subunit 1 family. NDH-1 is composed of 13 different subunits. Subunits NuoA, H, J, K, L, M, N constitute the membrane sector of the complex.

It is found in the cell inner membrane. The enzyme catalyses a quinone + NADH + 5 H(+)(in) = a quinol + NAD(+) + 4 H(+)(out). In terms of biological role, NDH-1 shuttles electrons from NADH, via FMN and iron-sulfur (Fe-S) centers, to quinones in the respiratory chain. The immediate electron acceptor for the enzyme in this species is believed to be ubiquinone. Couples the redox reaction to proton translocation (for every two electrons transferred, four hydrogen ions are translocated across the cytoplasmic membrane), and thus conserves the redox energy in a proton gradient. This subunit may bind ubiquinone. The sequence is that of NADH-quinone oxidoreductase subunit H from Pseudomonas syringae pv. syringae (strain B728a).